The chain runs to 588 residues: Proteasome-associated ATPase (588 aa).

The segment covering 1–10 (MAAHDDDMNR) has biased composition (basic and acidic residues). Residues 1 to 23 (MAAHDDDMNRGIRPGRGSDDPSG) form a disordered region. A coiled-coil region spans residues 47 to 94 (RILEERIVELQTNLAGVSAQNERLANTLREARDQIVALKEEVDRLAQP). ATP is bound at residue 276–281 (GCGKTL). The segment at 587–588 (YL) is docks into pockets in the proteasome alpha-ring.

This sequence belongs to the AAA ATPase family. Homohexamer. Assembles into a hexameric ring structure that caps the 20S proteasome core. Strongly interacts with the prokaryotic ubiquitin-like protein Pup through a hydrophobic interface; the interacting region of ARC lies in its N-terminal coiled-coil domain. There is one Pup binding site per ARC hexamer ring. Upon ATP-binding, the C-terminus of ARC interacts with the alpha-rings of the proteasome core, possibly by binding to the intersubunit pockets.

It participates in protein degradation; proteasomal Pup-dependent pathway. ATPase which is responsible for recognizing, binding, unfolding and translocation of pupylated proteins into the bacterial 20S proteasome core particle. May be essential for opening the gate of the 20S proteasome via an interaction with its C-terminus, thereby allowing substrate entry and access to the site of proteolysis. Thus, the C-termini of the proteasomal ATPase may function like a 'key in a lock' to induce gate opening and therefore regulate proteolysis. The chain is Proteasome-associated ATPase from Streptomyces scabiei (strain 87.22).